The chain runs to 355 residues: Guanine nucleotide-binding protein G(i) subunit alpha-2 (355 aa).

Residue G2 is the site of N-myristoyl glycine attachment. A lipid anchor (S-palmitoyl cysteine) is attached at C3. The region spanning 32–355 (REVKLLLLGA…KNNLKDCGLF (324 aa)) is the G-alpha domain. The G1 motif stretch occupies residues 35–48 (KLLLLGAGESGKST). Residues 40–47 (GAGESGKS), 176–182 (LRTRVKT), 201–205 (DVGGQ), 270–273 (NKKD), and A327 each bind GTP. Residues S47 and T182 each contribute to the Mg(2+) site. Positions 174–182 (DVLRTRVKT) are G2 motif. The tract at residues 197-206 (FKMFDVGGQR) is G3 motif. The interval 266–273 (ILFLNKKD) is G4 motif. The tract at residues 325-330 (TCATDT) is G5 motif.

The protein belongs to the G-alpha family. G(i/o/t/z) subfamily. In terms of assembly, g proteins are composed of 3 units; alpha, beta and gamma. The alpha chain contains the guanine nucleotide binding site. In this context, interacts with GNB2. Interacts with UNC5B. Interacts with GPSM1. Interacts with RGS12 and RGS14. Interacts (inactive GDP-bound form) with NUCB1 (via GBA motif); the interaction leads to activation of GNAI3. Interacts (inactive GDP-bound form) with CCDC88C/DAPLE (via GBA motif). Interacts (inactive GDP-bound form) with CCDC8A/GIV (via GBA motif). Interacts with CXCR1 and CXCR2.

It is found in the cytoplasm. The protein localises to the cytoskeleton. It localises to the microtubule organizing center. Its subcellular location is the centrosome. The protein resides in the cell membrane. It is found in the membrane. Guanine nucleotide-binding proteins (G proteins) are involved as modulators or transducers in various transmembrane signaling systems. The G(i) proteins are involved in hormonal regulation of adenylate cyclase: they inhibit the cyclase in response to beta-adrenergic stimuli. May play a role in cell division. This chain is Guanine nucleotide-binding protein G(i) subunit alpha-2 (GNAI2), found in Canis lupus familiaris (Dog).